Here is a 176-residue protein sequence, read N- to C-terminus: GTP-dependent dephospho-CoA kinase (176 aa).

Residues Asp-47, Val-48, Asp-66, and Glu-125 each coordinate GTP.

This sequence belongs to the GTP-dependent DPCK family.

It catalyses the reaction 3'-dephospho-CoA + GTP = GDP + CoA + H(+). The protein operates within cofactor biosynthesis; coenzyme A biosynthesis. Functionally, catalyzes the GTP-dependent phosphorylation of the 3'-hydroxyl group of dephosphocoenzyme A to form coenzyme A (CoA). In Methanocella arvoryzae (strain DSM 22066 / NBRC 105507 / MRE50), this protein is GTP-dependent dephospho-CoA kinase.